A 532-amino-acid chain; its full sequence is Nucleobase-ascorbate transporter 6 (532 aa).

A disordered region spans residues 1–24 (MAGGGAPAPKADEPQPHPPKDQLP). The segment covering 10 to 20 (KADEPQPHPPK) has biased composition (basic and acidic residues). 12 consecutive transmembrane segments (helical) span residues 39 to 59 (AILLGFQHYLVMLGTTVLIPT), 75 to 95 (VIQTILFVAGINTLLQTLFGT), 97 to 117 (LPAVVGASYTFVPTTISIILS), 137 to 157 (TQGALIVASTLQMILGFSGLW), 163 to 185 (FLSPISAVPLVGLVGFGLYEFGF), 192 to 212 (IEIGLPELLILVFVSQYLPHV), 223 to 243 (FAVIFAVVIVWIYAHLLTVGG), 289 to 309 (FAMMMASFVALVESTGAFVAV), 361 to 381 (VGSRRVVQIAAGFMIFFSILG), 392 to 414 (APIIAALYCLFFAYVGAGGLSFL), 426 to 446 (FILGFSVFLGLSIPQYFNEYT), and 463 to 483 (DMVNVPFSSEPFVAGSVAFFL).

The protein belongs to the nucleobase:cation symporter-2 (NCS2) (TC 2.A.40) family. In terms of tissue distribution, expressed in the apical region of cotyledons 4 days after imbibition (DAI). Expressed in the whole vasculature at 12 DAI. Expressed in the root central cylinder and lateral root primordia. Expressed in the vasculature of sepals, filaments, carpels and developing siliques.

It localises to the membrane. This chain is Nucleobase-ascorbate transporter 6 (NAT6), found in Arabidopsis thaliana (Mouse-ear cress).